Here is a 616-residue protein sequence, read N- to C-terminus: Chaperone protein HscA (616 aa).

It belongs to the heat shock protein 70 family.

Its function is as follows. Chaperone involved in the maturation of iron-sulfur cluster-containing proteins. Has a low intrinsic ATPase activity which is markedly stimulated by HscB. Involved in the maturation of IscU. The sequence is that of Chaperone protein HscA from Klebsiella pneumoniae subsp. pneumoniae (strain ATCC 700721 / MGH 78578).